Reading from the N-terminus, the 643-residue chain is Long-chain fatty acid transport protein 4 (643 aa).

The next 2 membrane-spanning stretches (helical) occupy residues 20–42 (LPWTQVGFSLLFLYLGSGGWRFI) and 139–156 (FVGLWLGMAKLGVEAALI). Position 243 to 254 (243 to 254 (YIYTSGTTGLPK)) interacts with AMP.

It belongs to the ATP-dependent AMP-binding enzyme family.

It is found in the endoplasmic reticulum membrane. The enzyme catalyses a fatty acid(in) = a fatty acid(out). It carries out the reaction (9Z,12Z)-octadecadienoate(out) = (9Z,12Z)-octadecadienoate(in). It catalyses the reaction (9Z)-octadecenoate(out) = (9Z)-octadecenoate(in). The catalysed reaction is hexadecanoate(out) = hexadecanoate(in). The enzyme catalyses a long-chain fatty acid + ATP + CoA = a long-chain fatty acyl-CoA + AMP + diphosphate. It carries out the reaction (5Z,8Z,11Z,14Z)-eicosatetraenoate + ATP + CoA = (5Z,8Z,11Z,14Z)-eicosatetraenoyl-CoA + AMP + diphosphate. It catalyses the reaction (9Z)-octadecenoate + ATP + CoA = (9Z)-octadecenoyl-CoA + AMP + diphosphate. The catalysed reaction is hexadecanoate + ATP + CoA = hexadecanoyl-CoA + AMP + diphosphate. The enzyme catalyses (E)-hexadec-2-enoate + ATP + CoA = (2E)-hexadecenoyl-CoA + AMP + diphosphate. It carries out the reaction a very long-chain fatty acid + ATP + CoA = a very long-chain fatty acyl-CoA + AMP + diphosphate. It catalyses the reaction tetracosanoate + ATP + CoA = tetracosanoyl-CoA + AMP + diphosphate. Its function is as follows. Mediates the import of long-chain fatty acids (LCFA) into the cell by facilitating their transport across cell membranes. Appears to be the principal fatty acid transporter in small intestinal enterocytes. Also functions as an acyl-CoA ligase catalyzing the ATP-dependent formation of fatty acyl-CoA using LCFA and very-long-chain fatty acids (VLCFA) as substrates, which prevents fatty acid efflux from cells and might drive more fatty acid uptake. Plays a role in the formation of the epidermal barrier. Required for fat absorption in early embryogenesis. Probably involved in fatty acid transport across the blood barrier. Indirectly inhibits RPE65 via substrate competition and via production of VLCFA derivatives like lignoceroyl-CoA. Prevents light-induced degeneration of rods and cones. This is Long-chain fatty acid transport protein 4 (SLC27A4) from Pongo abelii (Sumatran orangutan).